Reading from the N-terminus, the 388-residue chain is Mannitol-1-phosphate 5-dehydrogenase (388 aa).

4–15 serves as a coordination point for NAD(+); it reads AVHFGAGNIGRG.

The protein belongs to the mannitol dehydrogenase family.

It carries out the reaction D-mannitol 1-phosphate + NAD(+) = beta-D-fructose 6-phosphate + NADH + H(+). The protein is Mannitol-1-phosphate 5-dehydrogenase of Thermoanaerobacter pseudethanolicus (strain ATCC 33223 / 39E) (Clostridium thermohydrosulfuricum).